Reading from the N-terminus, the 350-residue chain is Small ribosomal subunit biogenesis GTPase RsgA (350 aa).

Residues 1–30 (MSKRKLTQNQQRRIQSNNAKTLHRHQHRHK) are disordered. Polar residues predominate over residues 7–20 (TQNQQRRIQSNNAK). Basic residues predominate over residues 21–30 (TLHRHQHRHK). In terms of domain architecture, CP-type G spans 106 to 274 (HNQIVRPDYY…LIDSPGIREF (169 aa)). GTP is bound by residues 162–165 (NKAD) and 216–224 (GQSGVGKSS). Zn(2+) contacts are provided by Cys298, Cys303, His305, and Cys311.

Belongs to the TRAFAC class YlqF/YawG GTPase family. RsgA subfamily. Monomer. Associates with 30S ribosomal subunit, binds 16S rRNA. Zn(2+) is required as a cofactor.

Its subcellular location is the cytoplasm. In terms of biological role, one of several proteins that assist in the late maturation steps of the functional core of the 30S ribosomal subunit. Helps release RbfA from mature subunits. May play a role in the assembly of ribosomal proteins into the subunit. Circularly permuted GTPase that catalyzes slow GTP hydrolysis, GTPase activity is stimulated by the 30S ribosomal subunit. The protein is Small ribosomal subunit biogenesis GTPase RsgA of Histophilus somni (strain 2336) (Haemophilus somnus).